The sequence spans 2299 residues: Protein Ycf2 (2299 aa).

1642–1649 serves as a coordination point for ATP; sequence GSIGTGRS.

It belongs to the Ycf2 family.

The protein localises to the plastid. The protein resides in the chloroplast stroma. Its function is as follows. Probable ATPase of unknown function. Its presence in a non-photosynthetic plant (Epifagus virginiana) and experiments in tobacco indicate that it has an essential function which is probably not related to photosynthesis. This chain is Protein Ycf2, found in Nandina domestica (Heavenly bamboo).